A 482-amino-acid chain; its full sequence is tRNA sulfurtransferase (482 aa).

Residues 61–165 enclose the THUMP domain; sequence LAIRDALTRI…DDRLLLIKGR (105 aa). ATP-binding positions include 183–184, Lys-265, Gly-287, and Gln-296; that span reads LI. Cys-344 and Cys-456 are disulfide-bonded. The Rhodanese domain occupies 404–482; sequence FGPNDVILDI…GFNNVKVYRP (79 aa). Cys-456 acts as the Cysteine persulfide intermediate in catalysis.

Belongs to the ThiI family.

It is found in the cytoplasm. The catalysed reaction is [ThiI sulfur-carrier protein]-S-sulfanyl-L-cysteine + a uridine in tRNA + 2 reduced [2Fe-2S]-[ferredoxin] + ATP + H(+) = [ThiI sulfur-carrier protein]-L-cysteine + a 4-thiouridine in tRNA + 2 oxidized [2Fe-2S]-[ferredoxin] + AMP + diphosphate. The enzyme catalyses [ThiS sulfur-carrier protein]-C-terminal Gly-Gly-AMP + S-sulfanyl-L-cysteinyl-[cysteine desulfurase] + AH2 = [ThiS sulfur-carrier protein]-C-terminal-Gly-aminoethanethioate + L-cysteinyl-[cysteine desulfurase] + A + AMP + 2 H(+). It participates in cofactor biosynthesis; thiamine diphosphate biosynthesis. Catalyzes the ATP-dependent transfer of a sulfur to tRNA to produce 4-thiouridine in position 8 of tRNAs, which functions as a near-UV photosensor. Also catalyzes the transfer of sulfur to the sulfur carrier protein ThiS, forming ThiS-thiocarboxylate. This is a step in the synthesis of thiazole, in the thiamine biosynthesis pathway. The sulfur is donated as persulfide by IscS. The protein is tRNA sulfurtransferase of Escherichia coli O8 (strain IAI1).